The primary structure comprises 427 residues: Trigger factor (427 aa).

Positions 163–248 constitute a PPIase FKBP-type domain; it reads GDTVVIDFVG…IHEVKAKEVP (86 aa).

This sequence belongs to the FKBP-type PPIase family. Tig subfamily.

The protein localises to the cytoplasm. It catalyses the reaction [protein]-peptidylproline (omega=180) = [protein]-peptidylproline (omega=0). Functionally, involved in protein export. Acts as a chaperone by maintaining the newly synthesized protein in an open conformation. Functions as a peptidyl-prolyl cis-trans isomerase. The protein is Trigger factor of Streptococcus pneumoniae (strain JJA).